The sequence spans 323 residues: Melanocortin receptor 3 (323 aa).

The Extracellular segment spans residues 1–37; sequence MNSSCCLSSVSPMLPNLSEHPAAPPASNRSGSGFCEQ. N-linked (GlcNAc...) asparagine glycans are attached at residues Asn-2, Asn-16, and Asn-28. The chain crosses the membrane as a helical span at residues 38–63; sequence VFIKPEVFLALGIVSLMENILVILAV. Residues 64 to 75 lie on the Cytoplasmic side of the membrane; it reads VRNGNLHSPMYF. Residues 76-100 traverse the membrane as a helical segment; the sequence is FLCSLAAADMLVSLSNSLETIMIAV. The Extracellular segment spans residues 101 to 118; it reads INSDSLTLEDQFIQHMDN. A helical membrane pass occupies residues 119–140; that stretch reads IFDSMICISLVASICNLLAIAI. Residues 141 to 160 are Cytoplasmic-facing; it reads DRYVTIFYALRYHSIMTVRK. The helical transmembrane segment at 161–181 threads the bilayer; sequence ALTLIGVIWVCCGICGVMFII. At 182 to 186 the chain is on the extracellular side; that stretch reads YSESK. A helical transmembrane segment spans residues 187–210; it reads MVIVCLITMFFAMVLLMGTLYIHM. Residues 211-245 lie on the Cytoplasmic side of the membrane; it reads FLFARLHVQRIAVLPPAGVVAPQQHSCMKGAVTIT. The helical transmembrane segment at 246–268 threads the bilayer; that stretch reads ILLGVFIFCWAPFFLHLVLIITC. At 269–277 the chain is on the extracellular side; that stretch reads PTNPYCICY. Residues 278-301 traverse the membrane as a helical segment; the sequence is TAHFNTYLVLIMCNSVIDPLIYAF. Residues 302 to 323 are Cytoplasmic-facing; it reads RSLELRNTFKEILCGCNSMNLG. The S-palmitoyl cysteine moiety is linked to residue Cys-315.

The protein belongs to the G-protein coupled receptor 1 family. Brain.

Its subcellular location is the cell membrane. In terms of biological role, receptor for MSH (alpha, beta and gamma) and ACTH. This receptor is mediated by G proteins which activate adenylate cyclase. Required for expression of anticipatory patterns of activity and wakefulness during periods of limited nutrient availability and for the normal regulation of circadian clock activity in the brain. This chain is Melanocortin receptor 3 (Mc3r), found in Mus musculus (Mouse).